Reading from the N-terminus, the 291-residue chain is ATP synthase gamma chain (291 aa).

It belongs to the ATPase gamma chain family. As to quaternary structure, F-type ATPases have 2 components, CF(1) - the catalytic core - and CF(0) - the membrane proton channel. CF(1) has five subunits: alpha(3), beta(3), gamma(1), delta(1), epsilon(1). CF(0) has three main subunits: a, b and c.

The protein localises to the cell inner membrane. Functionally, produces ATP from ADP in the presence of a proton gradient across the membrane. The gamma chain is believed to be important in regulating ATPase activity and the flow of protons through the CF(0) complex. In Burkholderia multivorans (strain ATCC 17616 / 249), this protein is ATP synthase gamma chain.